The chain runs to 205 residues: Small ribosomal subunit protein uS2 (205 aa).

It belongs to the universal ribosomal protein uS2 family.

This Methanoculleus marisnigri (strain ATCC 35101 / DSM 1498 / JR1) protein is Small ribosomal subunit protein uS2.